A 122-amino-acid chain; its full sequence is Lysozyme (122 aa).

The I-type lysozyme domain occupies 3–118; that stretch reads GGIVSQRCLS…WNRLQKISGC (116 aa). 7 disulfides stabilise this stretch: Cys10–Cys86, Cys13–Cys118, Cys15–Cys21, Cys26–Cys35, Cys48–Cys68, Cys58–Cys64, and Cys82–Cys100. The active-site Proton donor is the Glu18. Asp29 acts as the Nucleophile in catalysis. 41 to 47 is a substrate binding site; the sequence is KEAYWID. Substrate-binding positions include Tyr72, His93, 93–95, and Lys102; that span reads HNG.

It belongs to the glycosyl hydrolase 22 family. Type-I lysozyme subfamily. As to quaternary structure, monomer.

It localises to the secreted. It carries out the reaction Hydrolysis of (1-&gt;4)-beta-linkages between N-acetylmuramic acid and N-acetyl-D-glucosamine residues in a peptidoglycan and between N-acetyl-D-glucosamine residues in chitodextrins.. Has bacteriolytic activity against Gram-positive bacteria M.luteus. Also has chitinase activity. The polypeptide is Lysozyme (Meretrix lusoria (Hard clam)).